The sequence spans 187 residues: Elongation factor P (187 aa).

This sequence belongs to the elongation factor P family.

Its subcellular location is the cytoplasm. The protein operates within protein biosynthesis; polypeptide chain elongation. Its function is as follows. Involved in peptide bond synthesis. Stimulates efficient translation and peptide-bond synthesis on native or reconstituted 70S ribosomes in vitro. Probably functions indirectly by altering the affinity of the ribosome for aminoacyl-tRNA, thus increasing their reactivity as acceptors for peptidyl transferase. The chain is Elongation factor P from Synechococcus sp. (strain WH7803).